Here is a 568-residue protein sequence, read N- to C-terminus: Proline--tRNA ligase (568 aa).

The protein belongs to the class-II aminoacyl-tRNA synthetase family. ProS type 1 subfamily. As to quaternary structure, homodimer.

The protein localises to the cytoplasm. It carries out the reaction tRNA(Pro) + L-proline + ATP = L-prolyl-tRNA(Pro) + AMP + diphosphate. Functionally, catalyzes the attachment of proline to tRNA(Pro) in a two-step reaction: proline is first activated by ATP to form Pro-AMP and then transferred to the acceptor end of tRNA(Pro). As ProRS can inadvertently accommodate and process non-cognate amino acids such as alanine and cysteine, to avoid such errors it has two additional distinct editing activities against alanine. One activity is designated as 'pretransfer' editing and involves the tRNA(Pro)-independent hydrolysis of activated Ala-AMP. The other activity is designated 'posttransfer' editing and involves deacylation of mischarged Ala-tRNA(Pro). The misacylated Cys-tRNA(Pro) is not edited by ProRS. This chain is Proline--tRNA ligase, found in Campylobacter jejuni subsp. jejuni serotype O:6 (strain 81116 / NCTC 11828).